The sequence spans 190 residues: Imidazoleglycerol-phosphate dehydratase (190 aa).

The protein belongs to the imidazoleglycerol-phosphate dehydratase family.

The protein localises to the cytoplasm. It carries out the reaction D-erythro-1-(imidazol-4-yl)glycerol 3-phosphate = 3-(imidazol-4-yl)-2-oxopropyl phosphate + H2O. It participates in amino-acid biosynthesis; L-histidine biosynthesis; L-histidine from 5-phospho-alpha-D-ribose 1-diphosphate: step 6/9. In Sulfurimonas denitrificans (strain ATCC 33889 / DSM 1251) (Thiomicrospira denitrificans (strain ATCC 33889 / DSM 1251)), this protein is Imidazoleglycerol-phosphate dehydratase.